Reading from the N-terminus, the 1220-residue chain is Plasma membrane calcium-transporting ATPase 1 (1220 aa).

N-acetylglycine is present on G2. At 2–105 (GDMANNSVAY…KTFLQLVWEA (104 aa)) the chain is on the cytoplasmic side. Residues S8 and S17 each carry the phosphoserine modification. Residues 106-126 (LQDVTLIILEIAAIVSLGLSF) traverse the membrane as a helical segment. The Extracellular portion of the chain corresponds to 127–154 (YQPPEGDNALCGEVSVGEEEGEGETGWI). The chain crosses the membrane as a helical span at residues 155–175 (EGAAILLSVVCVVLVTAFNDW). Topologically, residues 176–366 (SKEKQFRGLQ…KEKSVLQGKL (191 aa)) are cytoplasmic. The tract at residues 297–356 (EEEKKDEKKKEKKNKKQDGAIENRNKAKAQDGAAMEMQPLKSEEGGDGDEKDKKKANLPK) is disordered. Composition is skewed to basic and acidic residues over residues 312 to 325 (KQDG…KAKA) and 337 to 356 (KSEE…NLPK). The residue at position 338 (S338) is a Phosphoserine. Residues 367 to 386 (TKLAVQIGKAGLLMSAITVI) form a helical membrane-spanning segment. The Extracellular segment spans residues 387 to 418 (ILVLYFVIDTFWVQKRPWLAECTPIYIQYFVK). The helical transmembrane segment at 419 to 439 (FFIIGVTVLVVAVPEGLPLAV) threads the bilayer. Over 440-855 (TISLAYSVKK…RNVYDSISKF (416 aa)) the chain is Cytoplasmic. D475 acts as the 4-aspartylphosphate intermediate in catalysis. Residues D475, T477, and D797 each coordinate Mg(2+). Residues 856-876 (LQFQLTVNVVAVIVAFTGACI) form a helical membrane-spanning segment. At 877–882 (TQDSPL) the chain is on the extracellular side. The helical transmembrane segment at 883 to 903 (KAVQMLWVNLIMDTLASLALA) threads the bilayer. Over 904–927 (TEPPTESLLLRKPYGRNKPLISRT) the chain is Cytoplasmic. A helical membrane pass occupies residues 928–948 (MMKNILGHAFYQLVVVFTLLF). Topologically, residues 949-971 (AGEKFFDIDSGRNAPLHAPPSEH) are extracellular. The helical transmembrane segment at 972–991 (YTIVFNTFVLMQLFNEINAR) threads the bilayer. Over 992-1005 (KIHGERNVFEGIFN) the chain is Cytoplasmic. The helical transmembrane segment at 1006–1027 (NAIFCTIVLGTFVVQIIIVQFG) threads the bilayer. Topologically, residues 1028–1039 (GKPFSCSELSIE) are extracellular. Residues 1040–1060 (QWLWSIFLGMGTLLWGQLIST) traverse the membrane as a helical segment. Residues 1061–1220 (IPTSRLKFLK…SPLHSLETSL (160 aa)) are Cytoplasmic-facing. The segment at 1100 to 1117 (LRRGQILWFRGLNRIQTQ) is calmodulin-binding subdomain A. At T1116 the chain carries Phosphothreonine; by PKC. Positions 1118-1220 (IRVVNAFRSS…SPLHSLETSL (103 aa)) are required for basolateral membrane targeting. 2 positions are modified to phosphoserine: S1140 and S1155. The interval 1160–1220 (PLIDDTDAED…SPLHSLETSL (61 aa)) is disordered. T1165 carries the post-translational modification Phosphothreonine. S1178 carries the post-translational modification Phosphoserine; by PKA. Residue S1182 is modified to Phosphoserine. The span at 1200–1220 (MNKSATSSSPGSPLHSLETSL) shows a compositional bias: polar residues.

It belongs to the cation transport ATPase (P-type) (TC 3.A.3) family. Type IIB subfamily. As to quaternary structure, monomer. Dimer. Oligomer. Calmodulin binding. Interacts with PDZD11. Interacts with SLC35G1 and STIM1; inhibits calcium-transporting ATPase activity after store depletion. Interacts with YWHAE; interacts with the monomeric and dimeric forms of the YWHAE but prefer the monomer form; this interaction inhibits calcium-transporting ATPase activity. Interacts with NPTN; this interaction stabilizes ATP2B1 and increases ATPase activity; this interaction controls T cell calcium homeostasis following T cell activation. Interacts with EPB41; regulates small intestinal calcium absorption through regulation of membrane expression of ATP2B1. Isoform B: Ubiquitously expressed. Isoform C: Found in brain cortex, skeletal muscle and heart muscle. Isoform D: Has only been found in fetal skeletal muscle. Isoform K: Found in small intestine and liver. Abundantly expressed in the endometrial epithelial cells and glandular epithelial cells in early-proliferative phase and early-secretory phases.

The protein localises to the cell membrane. The protein resides in the basolateral cell membrane. It is found in the synapse. It localises to the presynaptic cell membrane. Its subcellular location is the cytoplasmic vesicle. The protein localises to the secretory vesicle. The protein resides in the synaptic vesicle membrane. The enzyme catalyses Ca(2+)(in) + ATP + H2O = Ca(2+)(out) + ADP + phosphate + H(+). Functionally, catalyzes the hydrolysis of ATP coupled with the transport of calcium from the cytoplasm to the extracellular space thereby maintaining intracellular calcium homeostasis. Plays a role in blood pressure regulation through regulation of intracellular calcium concentration and nitric oxide production leading to regulation of vascular smooth muscle cells vasoconstriction. Positively regulates bone mineralization through absorption of calcium from the intestine. Plays dual roles in osteoclast differentiation and survival by regulating RANKL-induced calcium oscillations in preosteoclasts and mediating calcium extrusion in mature osteoclasts. Regulates insulin sensitivity through calcium/calmodulin signaling pathway by regulating AKT1 activation and NOS3 activation in endothelial cells. May play a role in synaptic transmission by modulating calcium and proton dynamics at the synaptic vesicles. The protein is Plasma membrane calcium-transporting ATPase 1 of Homo sapiens (Human).